The sequence spans 353 residues: Quinolinate synthase (353 aa).

Iminosuccinate-binding residues include His47 and Ser68. Cys113 contacts [4Fe-4S] cluster. Residues 139–141 (YAN) and Ser156 contribute to the iminosuccinate site. Position 200 (Cys200) interacts with [4Fe-4S] cluster. Residues 226–228 (HPE) and Thr243 each bind iminosuccinate. [4Fe-4S] cluster is bound at residue Cys297.

Belongs to the quinolinate synthase family. Type 1 subfamily. [4Fe-4S] cluster serves as cofactor.

The protein localises to the cytoplasm. It carries out the reaction iminosuccinate + dihydroxyacetone phosphate = quinolinate + phosphate + 2 H2O + H(+). It functions in the pathway cofactor biosynthesis; NAD(+) biosynthesis; quinolinate from iminoaspartate: step 1/1. Its function is as follows. Catalyzes the condensation of iminoaspartate with dihydroxyacetone phosphate to form quinolinate. The polypeptide is Quinolinate synthase (Vibrio parahaemolyticus serotype O3:K6 (strain RIMD 2210633)).